We begin with the raw amino-acid sequence, 247 residues long: tRNA uridine(34) hydroxylase (247 aa).

One can recognise a Rhodanese domain in the interval 124 to 218 (TKQDVIVIDT…YLEDTQNKNN (95 aa)). Cys-178 acts as the Cysteine persulfide intermediate in catalysis.

This sequence belongs to the TrhO family.

It catalyses the reaction uridine(34) in tRNA + AH2 + O2 = 5-hydroxyuridine(34) in tRNA + A + H2O. Catalyzes oxygen-dependent 5-hydroxyuridine (ho5U) modification at position 34 in tRNAs. This chain is tRNA uridine(34) hydroxylase, found in Rickettsia massiliae (strain Mtu5).